The chain runs to 2528 residues: MLAQDVEFVDLPPPEATAGAATTDNETSSFNSNPVPTPSEASSIGPPHQLPVPVPDGDQPPLVEPMAICGMAMRLPGGIRDAEGFWDLLYNKRSGRCRVPKDRYNVENWFGPGKIGHVASEYGYFLDDVDLRNADASFWSMTKQEIEAMDPQQRLSLEVTYECLQNAGQRPEELRGRKIGVYLGTFEGDWLELDGRDPQHYHMYRLTGYGDYMSANRIHYEFGFMGPSVTIRTACSSSLTGLYDACHAISAGDCDSAIVACANIIYSPRTSITMQEQGVISPSGFCKTFDANADGYARGEAVSAVYVKKLSDAIRDGDPIRSVIRSTCINAGGKASTLTAPNTAAHETLIRRGHELAGVTDFSKTAMIECHGTGTAVGDPIETAAVANVFGEHGIYIGSVKTNLGHSEGASGLASIIKMTLALEHKIIPPNINFTTPNPKIPFERCKLKVPTEPLPWPKDRAELVGVNSFGIGGSNAHVLLGSAASFGIGSVQQKIIASEQSAEVAMTELTPRLLLFSAKHQQSLERMVANHQAYFLSHPESLDDMAYSLALKREELSHRSFCVTNGEDDWVPSRTHRTSGRAPPMLIFTFTGQGAQWAQMGKALIDQVPRFRRSIEKLDQVLQALPTPPRWKLIDEIRASKKKSRLSEAELSQPCCTAIQIALVDILEHYGIHPDAVIGHSSGEIGAAYASHAISGADAIQIAFYRGLVMCSLNPAERPGGMAAVGLGAEELTPYLRPGVRVGCENSPNSTTLTGDKVSLEETMKAIKEANPDVFVRALQVDRAYHSHHMETVAPEYVELLTNQRVQAMDPSVKFFSSVTGRQVDQSKELGPLYWAKNLVSPVRFSTAMEELVQSLIGPKVFLEIGPHSALAGPIRQILQHHKSTDEYFNTLTRGSDSHKDLLKAVGEMWLQNIPVNLTAVLGEGRFLPDLPLYPWHYEEPLWCESRLSKEWRLREFPHHDILGSRVLESTDQNPSWRNILRLDVVPWIKEHEVAGEIVFPGVGYICMAGEAIRQLTGETGFTARRVHIKAALVMHQGQDVEVITQLQRIPLTNAADSKWYNFTVHSYNKGIWVKHIFGQVCAGSDREHQAPSLESLPRQLSRRGWYRKMKEMGLEYGSRFMGLTDMTAHPIERKTIATVVNDIREGESKYAVHPVSLDCLLQAIVPATFNGLTRRFQHLGIPTYMEEIYVCPPLQPEMIIEACADEQPTAALSGSIIAVSNGHVTIDIRGLQMSAIGDAADASGQDPHAAVELEWREDINLISDAAKLIHPAKDRTDLHHLLDRFASASMMDTSTRLRGVEPTRSHLTHYQKWIESTADLIKLGKYPGLQPEDEIVEVSDAERVNIIESLYLSLLETDAAATATAIYRIWKECQGIFTGETDELELLLEGEVLHSLYDFMQNSEYRVFLELLAHRKPNLRVLEIGAGTGGTTATVLPALKSLYGERMYHSYTYTDISAGFFPQAKKRFENYPGLEFATLDISQDPLSQGFEAESFDLIIACNVLHATSTLQDTLTNVRRLLHPQGRLFLQELSPATKWINYVMGVLPGWWLGEQDGRYPEPYIGIDQWDALLSQSGFSGINLVSHDGYLNNNIVARPAADTQRQKRITLLHSCEDSASVTTSISQLLSSAGFGIDLYAIENANIPTPTQQDIVSILDLDRPFFHDLHESLFENLKGLLSQLRDTDSGILWVTRASQVGCKDPRYAMVNGVARVIRTELNIDFATLELEDFEQETLALIPQVLGEFQQRISEPNINTTTEWAVVGQKPLISRYHYIQVAEELKNNAVADSSTVKKLEQSRPGLVDTLCWKSMPISHALDENDVLVQVKCVGMNFKDVLISTGVITEKSSIGRGLGYEGSGLVLQVGSAVHKLSVGDRVIMSSSGSLTTTQQLDQRLCVKMPDSMTYEEGATMSAVYCTAIHCLLDVGGLRKGQSVLIHSASGGVGIAAMYIAQMVGAEVYATVGSEEKTQSLMSTFNIPRNRIFNSRTSEFLPRIMEETNGMGVDVVLNSLSGELLHASWKCTAEFGTFVEIGRRDFVGQGLLDMQPFEPNRSFVGFDLLLFSNKRPERIESIMTRAMDYYRAGFIQPIKPMTMFDAVSIVDAIRYMQRGQHIGKIVITMPENSTELSAEPPRQELALRQDRAYLFVGGLGGLGRSIATWLVEHGARHLVFLSRSAGNVPDDDPFVQELAVLGCTTTRISGDVSKLDDVLLAIRASGKPVGGVLQSSMVLRDNSFVDMNWDEWLGAVQPKVLGTWNLHNALLSEQPEEALDFFFLFSSAGAMSGQWGQANYNAGNTFLDAFVAYRHSLGLPASTVNIGVIQDIGYVSQNPEILDSLRSTAQYLMREPELLESIELMLHRSSPAESVVDHAVGRYVTRSQIGIGMRSTVPMDAPSNRTIWRKDPRMLVYRNLEVQSGPVSSSTGSDQVLTQFLREIGSNMTMLKAPETAELLAGEIGRTLFGFLMRADTEVVDLDAPLASVGIDSLISIELRNWIRRKIGVEVTVLEIVRADSVRDLGVLAQKKLAEK.

A disordered region spans residues 1–53 (MLAQDVEFVDLPPPEATAGAATTDNETSSFNSNPVPTPSEASSIGPPHQLPVP). The segment covering 24–42 (DNETSSFNSNPVPTPSEAS) has biased composition (polar residues). Residues 63 to 483 (VEPMAICGMA…GSNAHVLLGS (421 aa)) enclose the Ketosynthase family 3 (KS3) domain. Catalysis depends on for beta-ketoacyl synthase activity residues C235, H371, and H406. The tract at residues 590–909 (TFTGQGAQWA…HKDLLKAVGE (320 aa)) is malonyl-CoA:ACP transacylase (MAT) domain. Positions 961–1089 (HDILGSRVLE…GQVCAGSDRE (129 aa)) are N-terminal hotdog fold. Positions 961–1230 (HDILGSRVLE…VSNGHVTIDI (270 aa)) are dehydratase (DH) domain. In terms of domain architecture, PKS/mFAS DH spans 961-1244 (HDILGSRVLE…MSAIGDAADA (284 aa)). The Proton acceptor; for dehydratase activity role is filled by H993. Positions 1099 to 1244 (PRQLSRRGWY…MSAIGDAADA (146 aa)) are C-terminal hotdog fold. Residue D1160 is the Proton donor; for dehydratase activity of the active site. Positions 1409-1587 (VFLELLAHRK…GFSGINLVSH (179 aa)) are methyltransferase (CMet) domain. Residues 1803 to 2119 (GLVDTLCWKS…RGQHIGKIVI (317 aa)) form an enoyl reductase (ER) (ER) domain region. A ketoreductase (KR) domain region spans residues 2143-2322 (RAYLFVGGLG…ASTVNIGVIQ (180 aa)). The 79-residue stretch at 2447–2525 (ETAELLAGEI…DLGVLAQKKL (79 aa)) folds into the Carrier domain. S2485 bears the O-(pantetheine 4'-phosphoryl)serine mark.

It catalyses the reaction 9 malonyl-CoA + acetyl-CoA + S-adenosyl-L-methionine + 13 NADPH + 20 H(+) = soppiline A + S-adenosyl-L-homocysteine + 9 CO2 + 13 NADP(+) + 10 CoA + 7 H2O. It participates in secondary metabolite biosynthesis. Its function is as follows. Highly reducing polyketide synthase; part of the gene cluster that mediates the biosynthesis of the alkylresorcinols called soppilines. The biosynthesis starts with the HR-PKS pspA-catalyzed carbon chain assembly through nine chain elongation cycles, using acetyl CoA and malonyl CoA as a starter and extender units, respectively, to produce the polyketide soppiline A. In the first round, the KR, DH, and CMeT domains work to produce 2-methyl-2-butenyl thioester. In rounds 2 to 5, the KR, DH, and ER domains fully catalyze the reduction of the elongated beta-ketothioester, resulting in the insertion of eight methylene units. The unusual Z,E,Z-triene motif is likely constructed during rounds 6 to 8. Typically, the DH domain introduces a double bond at an alpha,beta-position of an elongated polyketide chain, with the dehydration of a beta-hydroxy group. The last extension cycle would be carried out with L-oriented beta-ketoreduction by the KR domain to produce beta-hydroxy carboxylic acid soppiline A. The type III PKS pspB intercepts the elongated polyketide chain at round 8 from the HR-PKS pspA, followed by a tri-keto extension and decarboxylative aldol cyclization to produce 1,3,5-trisubstituted alkylresorcinol soppiline B. Subsequently, the cytochrome P450 monooxygenase pspC catalyzes three-step oxidations at the C-4 methyl group to carboxylic acid to yield soppiline C. This chain is Highly reducing polyketide synthase pspA, found in Penicillium soppii.